The primary structure comprises 377 residues: WAT1-related protein At3g56620 (377 aa).

10 helical membrane-spanning segments follow: residues 13–33, 40–60, 67–87, 102–122, 142–162, 183–203, 210–230, 235–255, 274–294, and 299–319; these read FAMVCLQFGYAGMNLVTKVVL, YVLVAYRNAFATAAIAPFALL, PKMTFPIFMQIFVLALLGPLI, TFAGAVTNIVPALTFIISIIC, LVIVVGAMLMILFKIPLITFL, VFLLIASFSWASFFVLQAATL, LSLSTMVCFMGTLQSTALTFV, LSAWNIGFDMNLLASAYAGIM, IFVTAFNPLVVIIGSIIGFLI, and LNLGGVLGMAILVVGVCTVLW. 2 consecutive EamA domains span residues 22-152 and 190-318; these read YAGM…MLMI and FSWA…CTVL.

It belongs to the drug/metabolite transporter (DMT) superfamily. Plant drug/metabolite exporter (P-DME) (TC 2.A.7.4) family.

The protein resides in the membrane. This is WAT1-related protein At3g56620 from Arabidopsis thaliana (Mouse-ear cress).